The following is a 228-amino-acid chain: Eukaryotic translation initiation factor 4E-2 (228 aa).

A disulfide bridge links C130 with C134.

It belongs to the eukaryotic initiation factor 4E family. As to quaternary structure, eIF4F is a multi-subunit complex, the composition of which varies with external and internal environmental conditions. It is composed of at least eIF4A, eIF4E and eIF4G. eIF4E is also known to interact with other partners. In terms of tissue distribution, highly expressed in all somatic tissues.

In terms of biological role, recognizes and binds the 7-methylguanosine-containing mRNA cap during an early step in the initiation of protein synthesis and facilitates ribosome binding by inducing the unwinding of the mRNAs secondary structures. All 5 eIF4E proteins bind monomethyl cap structures. Only ife-1, ife-2 and ife-5 bind trimethyl cap structures which result from trans-splicing. Translation of trimethyl cap structure mRNAs may be regulated by intracellular redox state; disulfide bonds change the width and depth of the cap-binding cavity determining selectivity to mRNA caps. Probably by regulating mRNA translation in somatic cells, negatively regulates lifespan independently of daf-2/insulin and let-363/TOR pathways. Negatively regulates resistance to oxidative stress. May play a role in embryonic development. The polypeptide is Eukaryotic translation initiation factor 4E-2 (ife-2) (Caenorhabditis elegans).